We begin with the raw amino-acid sequence, 154 residues long: Prefoldin subunit alpha (154 aa).

A disordered region spans residues E123–Q154. A compositionally biased stretch (low complexity) spans L127–Q154.

It belongs to the prefoldin alpha subunit family. Heterohexamer of two alpha and four beta subunits.

The protein localises to the cytoplasm. Its function is as follows. Molecular chaperone capable of stabilizing a range of proteins. Seems to fulfill an ATP-independent, HSP70-like function in archaeal de novo protein folding. The protein is Prefoldin subunit alpha of Halobacterium salinarum (strain ATCC 29341 / DSM 671 / R1).